Reading from the N-terminus, the 273-residue chain is Putative pyruvate, phosphate dikinase regulatory protein (273 aa).

153-160 (GVSRTSKS) contributes to the ADP binding site.

It belongs to the pyruvate, phosphate/water dikinase regulatory protein family. PDRP subfamily.

The catalysed reaction is N(tele)-phospho-L-histidyl/L-threonyl-[pyruvate, phosphate dikinase] + ADP = N(tele)-phospho-L-histidyl/O-phospho-L-threonyl-[pyruvate, phosphate dikinase] + AMP + H(+). It carries out the reaction N(tele)-phospho-L-histidyl/O-phospho-L-threonyl-[pyruvate, phosphate dikinase] + phosphate + H(+) = N(tele)-phospho-L-histidyl/L-threonyl-[pyruvate, phosphate dikinase] + diphosphate. Its function is as follows. Bifunctional serine/threonine kinase and phosphorylase involved in the regulation of the pyruvate, phosphate dikinase (PPDK) by catalyzing its phosphorylation/dephosphorylation. The chain is Putative pyruvate, phosphate dikinase regulatory protein from Ehrlichia ruminantium (strain Gardel).